The chain runs to 95 residues: Protein GOLVEN 9 (95 aa).

The first 24 residues, 1–24 (MKKTSLKLMTLVLGFCFVIYLLQG), serve as a signal peptide directing secretion. A propeptide spanning residues 25–73 (PRGGSRNGDLLIARKLISLEPIETKNAARSLKDSISTDLEEEVDRLMEH) is cleaved from the precursor. The tract at residues 72 to 95 (EHEYPSPVKPRKRTPVHNGVRNRH) is disordered. A Sulfotyrosine modification is found at Tyr75. The span at 80–95 (KPRKRTPVHNGVRNRH) shows a compositional bias: basic residues. Hydroxyproline is present on Pro86. Residues 90 to 95 (GVRNRH) constitute a propeptide that is removed on maturation.

Belongs to the RGF family. In terms of assembly, binds to LRR receptor-like serine/threonine-protein kinases to trigger their dimerization with SERK proteins and subsequent signaling. As to expression, expressed in roots.

The protein resides in the secreted. Its function is as follows. Signaling peptide (root growth factor) required during root gravitropism in a PIN2-traffic dependent manner. Regulates the pattern of root growth and lateral root development by modulating the length and the number of cortical cells in the root apical meristem (RAM), and the anticlinal asymmetric cell divisions in lateral root initiation cells. In Arabidopsis thaliana (Mouse-ear cress), this protein is Protein GOLVEN 9.